The primary structure comprises 295 residues: Shikimate dehydrogenase (NADP(+)) (295 aa).

Residues 20–22 (SWS) and threonine 68 each bind shikimate. Lysine 72 serves as the catalytic Proton acceptor. Shikimate contacts are provided by asparagine 93 and aspartate 108. Residues 132–136 (GNGGA) and methionine 234 contribute to the NADP(+) site. Residue tyrosine 236 coordinates shikimate. Glycine 257 contributes to the NADP(+) binding site.

The protein belongs to the shikimate dehydrogenase family. In terms of assembly, homodimer.

The enzyme catalyses shikimate + NADP(+) = 3-dehydroshikimate + NADPH + H(+). It participates in metabolic intermediate biosynthesis; chorismate biosynthesis; chorismate from D-erythrose 4-phosphate and phosphoenolpyruvate: step 4/7. In terms of biological role, involved in the biosynthesis of the chorismate, which leads to the biosynthesis of aromatic amino acids. Catalyzes the reversible NADPH linked reduction of 3-dehydroshikimate (DHSA) to yield shikimate (SA). The polypeptide is Shikimate dehydrogenase (NADP(+)) (Chlorobaculum tepidum (strain ATCC 49652 / DSM 12025 / NBRC 103806 / TLS) (Chlorobium tepidum)).